The following is a 1883-amino-acid chain: Lysophospholipase NTE1 (1883 aa).

The Cytoplasmic portion of the chain corresponds to 1-75 (MSQVPVASPA…LLRVVLASLN (75 aa)). A helical transmembrane segment spans residues 76–96 (LIRILATFSTITVPSLVYAIL). At 97 to 103 (HYSLTLQ) the chain is on the lumenal side. A helical membrane pass occupies residues 104–124 (LNFPSLALLFLTSLISAFIWL). At 125–1883 (RYRHLNKYER…AGISARRNSI (1759 aa)) the chain is on the cytoplasmic side. 6 disordered regions span residues 284 to 327 (HLAP…FNPP), 355 to 410 (ERLG…LYHA), 618 to 693 (SQRS…MVGP), 716 to 764 (SAQP…RKGS), 921 to 1069 (EEDR…ATNS), and 1084 to 1108 (LHQQ…GKRS). The segment covering 311 to 327 (NNATAPTSPYSSAFNPP) has biased composition (polar residues). The segment covering 372–383 (ARTASSGTASAT) has biased composition (low complexity). Polar residues predominate over residues 650 to 668 (PSLTTSSKQSNQKPTSSRI). Residues 863–1158 (AGHG…RRPI) and 1166–1285 (RLLS…IARR) contribute to the a nucleoside 3',5'-cyclic phosphate site. The span at 936–948 (TDASSGSSRQNRP) shows a compositional bias: polar residues. Positions 964-974 (LLDERNLREAD) are enriched in basic and acidic residues. 2 stretches are compositionally biased toward polar residues: residues 988–998 (ISSNGDGNSGS) and 1084–1100 (LHQQ…QSSQ). A PNPLA domain is found at 1544-1708 (LVLGGGGARG…VDNLPVTVML (165 aa)). Residues 1548–1553 (GGGARG) carry the GXGXXG motif. Positions 1575–1579 (GTSIG) match the GXSXG motif. Catalysis depends on S1577, which acts as the Nucleophile. D1695 serves as the catalytic Proton acceptor. Residues 1695–1697 (DGG) carry the DGA/G motif. Residues 1852-1883 (DESGVGGGVRKIRKKRRRTRRKAGISARRNSI) are disordered. The segment covering 1861–1874 (RKIRKKRRRTRRKA) has biased composition (basic residues).

The protein belongs to the NTE family.

It localises to the endoplasmic reticulum membrane. It carries out the reaction a 1-acyl-sn-glycero-3-phosphocholine + H2O = sn-glycerol 3-phosphocholine + a fatty acid + H(+). With respect to regulation, inhibited by organophosphorus esters. Intracellular phospholipase B that catalyzes the double deacylation of phosphatidylcholine (PC) to glycerophosphocholine (GroPCho). Plays an important role in membrane lipid homeostasis. Responsible for the rapid PC turnover in response to inositol, elevated temperatures, or when choline is present in the growth medium. This is Lysophospholipase NTE1 (NTE1) from Mycosarcoma maydis (Corn smut fungus).